The primary structure comprises 488 residues: Histone deacetylase 2 (488 aa).

The interval 9–322 (KKKVCYYYDG…WTYETAVALD (314 aa)) is histone deacetylase. 2 residues coordinate 1D-myo-inositol 1,4,5,6-tetrakisphosphate: Gly-28 and Lys-32. His-142 is an active-site residue. Zn(2+) is bound by residues Asp-177, His-179, and Asp-265. Arg-271 provides a ligand contact to 1D-myo-inositol 1,4,5,6-tetrakisphosphate. The interval 389 to 488 (AVHEDSGDED…GAKSEQLSNP (100 aa)) is disordered. Residues 402–417 (PDKRISIRASDKRIAC) show a composition bias toward basic and acidic residues. Residues 418-428 (DEEFSDSEDEG) are compositionally biased toward acidic residues. Positions 429-481 (EGGRRNVADHKKGAKKARIEEDKKETEDKKADVKEEDKSKDNSGEKTDTKGAK) are enriched in basic and acidic residues.

This sequence belongs to the histone deacetylase family. HD type 1 subfamily. Zn(2+) serves as cofactor.

Its subcellular location is the nucleus. The protein localises to the cytoplasm. The catalysed reaction is N(6)-acetyl-L-lysyl-[histone] + H2O = L-lysyl-[histone] + acetate. It catalyses the reaction N(6)-acetyl-L-lysyl-[protein] + H2O = L-lysyl-[protein] + acetate. It carries out the reaction N(6)-(2E)-butenoyl-L-lysyl-[protein] + H2O = (2E)-2-butenoate + L-lysyl-[protein]. The enzyme catalyses N(6)-(2-hydroxyisobutanoyl)-L-lysyl-[protein] + H2O = 2-hydroxy-2-methylpropanoate + L-lysyl-[protein]. The catalysed reaction is N(6)-[(S)-lactoyl]-L-lysyl-[protein] + H2O = (S)-lactate + L-lysyl-[protein]. With respect to regulation, inositol tetraphosphate (1D-myo-inositol 1,4,5,6-tetrakisphosphate) may act as an intermolecular glue between HDAC2 and N-Cor repressor complex components. Functionally, histone deacetylase that catalyzes the deacetylation of lysine residues on the N-terminal part of the core histones (H2A, H2B, H3 and H4). Histone deacetylation gives a tag for epigenetic repression and plays an important role in transcriptional regulation, cell cycle progression and developmental events. Histone deacetylases act via the formation of large multiprotein complexes. Also deacetylates non-histone proteins. In addition to protein deacetylase activity, also acts as a protein-lysine deacylase by recognizing other acyl groups: catalyzes removal of (2E)-butenoyl (crotonyl), lactoyl (lactyl) and 2-hydroxyisobutanoyl (2-hydroxyisobutyryl) acyl groups from lysine residues, leading to protein decrotonylation, delactylation and de-2-hydroxyisobutyrylation, respectively. This chain is Histone deacetylase 2 (HDAC2), found in Gallus gallus (Chicken).